Reading from the N-terminus, the 469-residue chain is Glutamate--tRNA ligase (469 aa).

The short motif at P9–G19 is the 'HIGH' region element. A 'KMSKS' region motif is present at residues K236–R240. K239 contributes to the ATP binding site.

The protein belongs to the class-I aminoacyl-tRNA synthetase family. Glutamate--tRNA ligase type 1 subfamily. In terms of assembly, monomer.

It is found in the cytoplasm. It carries out the reaction tRNA(Glu) + L-glutamate + ATP = L-glutamyl-tRNA(Glu) + AMP + diphosphate. Catalyzes the attachment of glutamate to tRNA(Glu) in a two-step reaction: glutamate is first activated by ATP to form Glu-AMP and then transferred to the acceptor end of tRNA(Glu). This is Glutamate--tRNA ligase from Pseudoalteromonas atlantica (strain T6c / ATCC BAA-1087).